The sequence spans 173 residues: MSHQKESKRDNQHTDKEYVEKLVKLNRTAKVVKGGRRFSFSALTVVGDQKGRVGYGFGKANDVSDAIRKSIEKAKANMVTFPLKNGTIPHEVQGKFKGSSVLLRPACSGTGIIAGGTIRAIMEAAGATDLLSKSLGSSSAVNVVKATFDAASLLMDGKKIAKSRGKTLLDVWG.

One can recognise an S5 DRBM domain in the interval 18–81; that stretch reads YVEKLVKLNR…EKAKANMVTF (64 aa).

It belongs to the universal ribosomal protein uS5 family. As to quaternary structure, part of the 30S ribosomal subunit. Contacts proteins S4 and S8.

Functionally, with S4 and S12 plays an important role in translational accuracy. Its function is as follows. Located at the back of the 30S subunit body where it stabilizes the conformation of the head with respect to the body. This is Small ribosomal subunit protein uS5 from Treponema denticola (strain ATCC 35405 / DSM 14222 / CIP 103919 / JCM 8153 / KCTC 15104).